We begin with the raw amino-acid sequence, 426 residues long: Histidine--tRNA ligase (426 aa).

It belongs to the class-II aminoacyl-tRNA synthetase family. As to quaternary structure, homodimer.

The protein localises to the cytoplasm. It catalyses the reaction tRNA(His) + L-histidine + ATP = L-histidyl-tRNA(His) + AMP + diphosphate + H(+). The polypeptide is Histidine--tRNA ligase (Legionella pneumophila (strain Lens)).